We begin with the raw amino-acid sequence, 131 residues long: Fatty acid-binding protein (131 aa).

Residues R106 and 126–128 contribute to the (5Z,8Z,11Z,14Z)-eicosatetraenoate site; that span reads RFY. (9Z)-octadecenoate-binding positions include R106 and 126-128; that span reads RFY.

Belongs to the calycin superfamily. Fatty-acid binding protein (FABP) family.

It localises to the cytoplasm. Its function is as follows. FABPs are thought to play a role in the intracellular transport of long-chain fatty acids and their acyl-CoA esters. The protein is Fatty acid-binding protein of Tyrophagus putrescentiae (Mold mite).